Here is a 64-residue protein sequence, read N- to C-terminus: Large ribosomal subunit protein bL35 (64 aa).

Basic residues predominate over residues 38–53; the sequence is KRKANLNAPKHVHHTN. A disordered region spans residues 38-64; that stretch reads KRKANLNAPKHVHHTNAHSVMSLLCRA.

It belongs to the bacterial ribosomal protein bL35 family.

The chain is Large ribosomal subunit protein bL35 from Helicobacter pylori (strain G27).